We begin with the raw amino-acid sequence, 431 residues long: 5-methylthioadenosine/S-adenosylhomocysteine deaminase (431 aa).

Zn(2+) is bound by residues H66 and H68. 3 residues coordinate substrate: E95, R147, and H185. H212 contributes to the Zn(2+) binding site. Residues E215 and D300 each coordinate substrate. Residue D300 participates in Zn(2+) binding.

This sequence belongs to the metallo-dependent hydrolases superfamily. MTA/SAH deaminase family. The cofactor is Zn(2+).

It carries out the reaction S-adenosyl-L-homocysteine + H2O + H(+) = S-inosyl-L-homocysteine + NH4(+). The enzyme catalyses S-methyl-5'-thioadenosine + H2O + H(+) = S-methyl-5'-thioinosine + NH4(+). Catalyzes the deamination of 5-methylthioadenosine and S-adenosyl-L-homocysteine into 5-methylthioinosine and S-inosyl-L-homocysteine, respectively. Is also able to deaminate adenosine. The sequence is that of 5-methylthioadenosine/S-adenosylhomocysteine deaminase from Desulfitobacterium hafniense (strain DSM 10664 / DCB-2).